A 514-amino-acid polypeptide reads, in one-letter code: L-Threonine dehydratase biosynthetic IlvA (514 aa).

Lys-62 carries the post-translational modification N6-(pyridoxal phosphate)lysine. Residues Asn-89, Gly-188–Leu-192, and Ser-315 contribute to the pyridoxal 5'-phosphate site. ACT-like domains are found at residues Ala-339–Asp-411 and Arg-434–Asn-504.

Belongs to the serine/threonine dehydratase family. Homotetramer. It depends on pyridoxal 5'-phosphate as a cofactor.

It catalyses the reaction L-threonine = 2-oxobutanoate + NH4(+). It functions in the pathway amino-acid biosynthesis; L-isoleucine biosynthesis; 2-oxobutanoate from L-threonine: step 1/1. Its activity is regulated as follows. Isoleucine allosterically inhibits whereas valine allosterically activates this enzyme. In terms of biological role, catalyzes the anaerobic formation of alpha-ketobutyrate and ammonia from threonine in a two-step reaction. The first step involved a dehydration of threonine and a production of enamine intermediates (aminocrotonate), which tautomerizes to its imine form (iminobutyrate). Both intermediates are unstable and short-lived. The second step is the nonenzymatic hydrolysis of the enamine/imine intermediates to form 2-ketobutyrate and free ammonia. In the low water environment of the cell, the second step is accelerated by RidA. In Salmonella typhimurium (strain LT2 / SGSC1412 / ATCC 700720), this protein is L-Threonine dehydratase biosynthetic IlvA (ilvA).